The following is a 1820-amino-acid chain: Afadin (1820 aa).

One can recognise a Ras-associating 1 domain in the interval 39–133 (FHGVMRFYFQ…GRFVLKNEND (95 aa)). The disordered stretch occupies residues 129-196 (KNENDAIPAK…PSQGDDSENS (68 aa)). The stretch at 146-186 (EKQEKEGVIQNFKRTLSKKEKKEKKKKEKEALRQASDKEER) forms a coiled coil. Residues 160 to 172 (TLSKKEKKEKKKK) are compositionally biased toward basic residues. Positions 173 to 189 (EKEALRQASDKEERPSQ) are enriched in basic and acidic residues. Serine 216, serine 246, and serine 256 each carry phosphoserine. A Ras-associating 2 domain is found at 246–348 (SGGTLRIYAD…LVFQLKRRPP (103 aa)). The span at 356-371 (KKHVEGKSLKGKDRAD) shows a compositional bias: basic and acidic residues. Positions 356–377 (KKHVEGKSLKGKDRADGSGYGS) are disordered. Phosphoserine is present on residues serine 391 and serine 424. An FHA domain is found at 426–492 (TEVGTEKFDD…LQSGMRLQFG (67 aa)). 13 positions are modified to phosphoserine: serine 512, serine 557, serine 562, serine 655, serine 1083, serine 1107, serine 1126, serine 1140, serine 1143, serine 1172, serine 1173, serine 1182, and serine 1199. Residues 538 to 569 (GDVHSGTALPASRSTTRLDSDRVSSASSTAER) form a disordered region. One can recognise a Dilute domain in the interval 653–908 (DISPTERTHK…IENVVAVAEN (256 aa)). The PDZ domain occupies 1007-1093 (IITVTLKKQN…VVTLEVAKQG (87 aa)). The disordered stretch occupies residues 1107 to 1194 (SPMMQRISDR…GKGPYTSGTA (88 aa)). Residues 1113–1128 (ISDRRGSGKPRPKSEG) are compositionally biased toward basic and acidic residues. Polar residues predominate over residues 1132 to 1143 (YNNSAQNGSPES). The span at 1152–1172 (SEPKKLPGDDRLMKNRADHRS) shows a compositional bias: basic and acidic residues. The interval 1203–1222 (GNLCTEEQSPPPRPEAYPIP) is disordered. Threonine 1232 carries the phosphothreonine modification. 3 disordered regions span residues 1235–1278 (ASKS…SQEE), 1308–1527 (QSSS…KQQQ), and 1567–1716 (RLQE…LKTQ). Residue serine 1238 is modified to Phosphoserine. Over residues 1252-1262 (YEEKPHVHTES) the composition is skewed to basic and acidic residues. Serine 1275 carries the post-translational modification Phosphoserine. The segment covering 1309–1318 (SSSVESSTSS) has biased composition (low complexity). Polar residues predominate over residues 1325 to 1337 (SSKSVTPASTLTK). Serine 1328 is modified (phosphoserine). Threonine 1330 is modified (phosphothreonine). The span at 1364–1373 (LPPPPPPPPV) shows a compositional bias: pro residues. Basic and acidic residues predominate over residues 1407 to 1440 (EWKKREEHQRWYEKEKARLEEERERKRREQERKL). Residues 1410-1446 (KREEHQRWYEKEKARLEEERERKRREQERKLGQMRSQ) adopt a coiled-coil conformation. The segment covering 1443 to 1457 (MRSQTLNPASFSPLA) has biased composition (polar residues). The segment covering 1487–1503 (TIERKDLQYITISKEEL) has biased composition (basic and acidic residues). A phosphoserine mark is found at serine 1499 and serine 1510. Basic and acidic residues predominate over residues 1513–1526 (PWKRDAREKLEKQQ). A coiled-coil region spans residues 1523 to 1561 (EKQQQMHIVDMLSKEIHELQNKVDRTAEESDRLRKLMLE). Residues 1576–1587 (EDDDEEEDDDVD) show a composition bias toward acidic residues. The stretch at 1593-1665 (QRLEAERRAR…SRLEAERRRQ (73 aa)) forms a coiled coil. The segment covering 1595-1675 (LEAERRARMQ…HEEAARRLLE (81 aa)) has biased composition (basic and acidic residues). Serine 1694, serine 1719, serine 1770, and serine 1795 each carry phosphoserine. The segment at 1734–1820 (EEEDYGPAGP…TELENELNTK (87 aa)) is disordered. Residues 1759-1772 (APREAREKLTRSQD) show a composition bias toward basic and acidic residues. Positions 1800-1820 (VSDKVKASRKLTELENELNTK) are enriched in basic and acidic residues. Residue lysine 1803 is modified to N6-acetyllysine.

In terms of assembly, homodimer. Interacts with F-actin, nectin and NECTIN3. Essential for the association of nectin and E-cadherin. Isoform 2/s-afadin does not interact with F-actin. Interacts with ZO-1 and occludin, but probably in an indirect manner. Interacts with RIT1, RIT2, NRXN1 and BCR. Interacts with ADAM10; the interaction locks ADAM10 at adherens junctions following ADAM10 recruitment to adherens junctions by TSPAN33. In terms of tissue distribution, isoform 1 is expressed only in a restricted set of epithelial structures during early embryogenesis.

It localises to the cell junction. Its subcellular location is the adherens junction. Its function is as follows. Belongs to an adhesion system, probably together with the E-cadherin-catenin system, which plays a role in the organization of homotypic, interneuronal and heterotypic cell-cell adherens junctions (AJs). Nectin- and actin-filament-binding protein that connects nectin to the actin cytoskeleton. May play a key role in the organization of epithelial structures of the embryonic ectoderm. Essential for the organization of adherens junctions. This is Afadin from Mus musculus (Mouse).